The following is a 562-amino-acid chain: MKKKKQALKVLLSVGILSSSFAFAHTSSAAPNNVLSTEKYNKEIKSPEFISGKLSGPSSQKAQDVVFHYMNTNKDKYKLGNENAQNSFKVTEVVKDPVEQATVVRLQQVYNNIPVWGSTQLAHVAKDGTLKVVSGTVAPDLDKKEKLKGQKQVDSKKAIQAAEKDLGFKPTYEKSPSSELYVYQNGSDTTYAYVVNLNFLSPEPGNYYYFVDAISGKVLDKYNTIDSVAGPKADVKQAAKPAAKPVTGTNAIGSGKGVLGDTKSLKTTLSSSTYYLQDNTRGATIYTYDAKNRTSLPGTLWTDTDNTYNATRDAAAVDAHYYAGVTYDYYKNKFNRNSYDNAGAPLKSTVHYSSGYNNAFWNGSQMVYGDGDGTTFVPLSGGLDVIGHELTHAVTERSSNLIYQYESGALNEAISDIFGTLVEYYDNRNPDWEIGEDIYTPGTSGDALRSMSNPAKYGDPDHYSKRYTGSSDNGGVHTNSGIINKAAYLLANGGTHYGVTVTGIGGDKLGKIYYRANTLYFTQSTTFSQARAGLVQAAADLYGSGSQEVISVGKSFDAVGVQ.

Positions 1 to 24 (MKKKKQALKVLLSVGILSSSFAFA) are cleaved as a signal peptide. A propeptide spans 25-245 (HTSSAAPNNV…KQAAKPAAKP (221 aa)) (activation peptide). Positions 303, 305, and 384 each coordinate Ca(2+). His388 is a Zn(2+) binding site. Glu389 is a catalytic residue. Positions 392 and 412 each coordinate Zn(2+). Glu423, Asn429, Asp431, Glu433, Glu436, Tyr439, Thr440, and Asp446 together coordinate Ca(2+). Residue His477 is the Proton donor of the active site.

The protein belongs to the peptidase M4 family. The cofactor is Ca(2+). Zn(2+) is required as a cofactor.

The protein resides in the secreted. It catalyses the reaction Similar, but not identical, to that of thermolysin.. Its function is as follows. Extracellular zinc metalloprotease. The protein is Bacillolysin (nprM) of Priestia megaterium (strain DSM 319 / IMG 1521) (Bacillus megaterium).